Reading from the N-terminus, the 131-residue chain is Glycine cleavage system H protein (131 aa).

Residues 24–106 (VYCVGITEHA…YTDGWLFKIK (83 aa)) enclose the Lipoyl-binding domain. N6-lipoyllysine is present on Lys65.

Belongs to the GcvH family. The glycine cleavage system is composed of four proteins: P, T, L and H. (R)-lipoate serves as cofactor.

Functionally, the glycine cleavage system catalyzes the degradation of glycine. The H protein shuttles the methylamine group of glycine from the P protein to the T protein. The sequence is that of Glycine cleavage system H protein from Sodalis glossinidius (strain morsitans).